The sequence spans 217 residues: MMANPPTLPISDHSGGGSQSQQPVSTPAFRTFLSRLSSSIRQSLSQRRPWLELVDRSAISRPESLTDAYSRIRRNLPYFKVNYVTIVSLVLALSLLSHPFSLLVLLCLFCAWIFLYLFRPSDQPLVVLGRTFSDRETLGVLVILTIVVVFLTSVGSLLTSALMIGFGIVCLHGAFRVPEDLFLDDQEPANTGLLSFLSGAATSAAVAAASTPASGRV.

Residues 1–24 (MMANPPTLPISDHSGGGSQSQQPV) are disordered. 5 helical membrane-spanning segments follow: residues 76–96 (LPYFKVNYVTIVSLVLALSLL), 98–118 (HPFSLLVLLCLFCAWIFLYLF), 138–158 (LGVLVILTIVVVFLTSVGSLL), 162–182 (LMIGFGIVCLHGAFRVPEDLF), and 193–213 (LLSFLSGAATSAAVAAASTPA).

The protein belongs to the PRA1 family. Interacts with PRA1B1, PRA1B2, PRA1B4, PRA1B5, PRA1B6 and PRA1E. As to expression, expressed in hypocotyls and shoot apex.

The protein resides in the endosome membrane. May be involved in both secretory and endocytic intracellular trafficking in the endosomal/prevacuolar compartments. This is PRA1 family protein B3 (PRA1B3) from Arabidopsis thaliana (Mouse-ear cress).